The sequence spans 306 residues: Acetyl-coenzyme A carboxylase carboxyl transferase subunit beta (306 aa).

A CoA carboxyltransferase N-terminal domain is found at 25-294 (VWTKCDSCGQ…PQDPLPHEPR (270 aa)). The Zn(2+) site is built by C29, C32, C48, and C51. A C4-type zinc finger spans residues 29 to 51 (CDSCGQVLYRAELERNLEVCPKC). A disordered region spans residues 281–306 (NRPQPQDPLPHEPRPDAVPEDHQDEV). A compositionally biased stretch (basic and acidic residues) spans 289-306 (LPHEPRPDAVPEDHQDEV).

It belongs to the AccD/PCCB family. In terms of assembly, acetyl-CoA carboxylase is a heterohexamer composed of biotin carboxyl carrier protein (AccB), biotin carboxylase (AccC) and two subunits each of ACCase subunit alpha (AccA) and ACCase subunit beta (AccD). Requires Zn(2+) as cofactor.

The protein localises to the cytoplasm. The catalysed reaction is N(6)-carboxybiotinyl-L-lysyl-[protein] + acetyl-CoA = N(6)-biotinyl-L-lysyl-[protein] + malonyl-CoA. The protein operates within lipid metabolism; malonyl-CoA biosynthesis; malonyl-CoA from acetyl-CoA: step 1/1. Its function is as follows. Component of the acetyl coenzyme A carboxylase (ACC) complex. Biotin carboxylase (BC) catalyzes the carboxylation of biotin on its carrier protein (BCCP) and then the CO(2) group is transferred by the transcarboxylase to acetyl-CoA to form malonyl-CoA. This is Acetyl-coenzyme A carboxylase carboxyl transferase subunit beta from Sodalis glossinidius (strain morsitans).